The following is a 299-amino-acid chain: Palmitoyltransferase ZDHHC3 (299 aa).

Residues 1–47 lie on the Cytoplasmic side of the membrane; it reads MMLIPTHHFRNIERKPEYLQPEKCVPPPYPGPVGTMWFIRDGCGIAC. Y18 carries the post-translational modification Phosphotyrosine. Residues 48 to 68 traverse the membrane as a helical segment; the sequence is AIVTWFLVLYAEFVVLFVMLI. Residues 69 to 72 lie on the Extracellular side of the membrane; sequence PSRD. The helical transmembrane segment at 73–93 threads the bilayer; sequence YVYSIINGIVFNLLAFLALAS. Topologically, residues 94–171 are cytoplasmic; that stretch reads HCRAMLTDPG…NCVGENNQKY (78 aa). Residues 127–177 enclose the DHHC domain; the sequence is YKCPKCCSIKPDRAHHCSVCKRCIRKMDHHCPWVNNCVGENNQKYFVLFTM. A lipid anchor (S-palmitoyl cysteine) is attached at C146. C157 acts as the S-palmitoyl cysteine intermediate in catalysis. The helical transmembrane segment at 172-192 threads the bilayer; it reads FVLFTMYIALISLHALIMVGF. Topologically, residues 193 to 214 are extracellular; sequence HFLHCFEEDWTKCSSFSPPTTV. A helical transmembrane segment spans residues 215-235; the sequence is ILLILLCFEGLLFLIFTSVMF. Residues 236–299 lie on the Cytoplasmic side of the membrane; sequence GTQVHSICTD…GKADPYQYVV (64 aa).

It belongs to the DHHC palmitoyltransferase family. Monomer. Homooligomers. The monomeric form has a higher catalytic activity. Forms heterooligomers with ZDHHC7. Interacts with TNFRSF10A. Autopalmitoylated. In terms of processing, phosphorylation by FGFR1 and SRC probably regulates the palmitoyltransferase activity. As to expression, widely expressed with significant expression in heart, lung, liver, skeletal muscle, kidney, testis, thymus, small intestine and leukocyte.

It is found in the golgi apparatus membrane. It catalyses the reaction L-cysteinyl-[protein] + hexadecanoyl-CoA = S-hexadecanoyl-L-cysteinyl-[protein] + CoA. The catalysed reaction is L-cysteinyl-[protein] + tetradecanoyl-CoA = S-tetradecanoyl-L-cysteinyl-[protein] + CoA. The enzyme catalyses L-cysteinyl-[protein] + octadecanoyl-CoA = S-octadecanoyl-L-cysteinyl-[protein] + CoA. In terms of biological role, golgi-localized palmitoyltransferase that catalyzes the addition of palmitate onto various protein substrates. Has no stringent fatty acid selectivity and in addition to palmitate can also transfer onto target proteins myristate from tetradecanoyl-CoA and stearate from octadecanoyl-CoA. Plays an important role in G protein-coupled receptor signaling pathways involving GNAQ and potentially other heterotrimeric G proteins by regulating their dynamic association with the plasma membrane. Palmitoylates ITGA6 and ITGB4, thereby regulating the alpha-6/beta-4 integrin localization, expression and function in cell adhesion to laminin. Plays a role in the TRAIL-activated apoptotic signaling pathway most probably through the palmitoylation and localization to the plasma membrane of TNFRSF10A. In the brain, by palmitoylating the gamma subunit GABRG2 of GABA(A) receptors and regulating their postsynaptic accumulation, plays a role in synaptic GABAergic inhibitory function and GABAergic innervation. Palmitoylates the neuronal protein GAP43 which is also involved in the formation of GABAergic synapses. Palmitoylates NCDN thereby regulating its association with endosome membranes. Probably palmitoylates PRCD and is involved in its proper localization within the photoreceptor. Could mediate the palmitoylation of NCAM1 and regulate neurite outgrowth. Could palmitoylate DNAJC5 and regulate its localization to Golgi membranes. Also constitutively palmitoylates DLG4. May also palmitoylate SNAP25. Could palmitoylate the glutamate receptors GRIA1 and GRIA2 but this has not been confirmed in vivo. Could also palmitoylate the D(2) dopamine receptor DRD2. May also palmitoylate LAMTOR1, promoting its localization to lysosomal membranes. Palmitoylates the Toll-like receptor 9/TLR9 in the Golgi and thereby regulates TLR9 trafficking to endosomes. May palmitoylate CALHM1 and CALHM3 subunits of gustatory voltage-gated ion channels and modulate channel gating and kinetics. Its function is as follows. May also function as a calcium transporter. In Homo sapiens (Human), this protein is Palmitoyltransferase ZDHHC3.